Reading from the N-terminus, the 246-residue chain is tRNA (guanine-N(7)-)-methyltransferase (246 aa).

Residues 1–26 (MSDSSSSSENAPATPESPGRPPRGIK) are disordered. Positions 74, 99, 126, and 149 each coordinate S-adenosyl-L-methionine. Residue Asp-149 is part of the active site. Residues Lys-153, Asp-185, and 224–227 (TKFE) contribute to the substrate site.

The protein belongs to the class I-like SAM-binding methyltransferase superfamily. TrmB family.

It catalyses the reaction guanosine(46) in tRNA + S-adenosyl-L-methionine = N(7)-methylguanosine(46) in tRNA + S-adenosyl-L-homocysteine. It functions in the pathway tRNA modification; N(7)-methylguanine-tRNA biosynthesis. Its function is as follows. Catalyzes the formation of N(7)-methylguanine at position 46 (m7G46) in tRNA. This chain is tRNA (guanine-N(7)-)-methyltransferase, found in Chromohalobacter salexigens (strain ATCC BAA-138 / DSM 3043 / CIP 106854 / NCIMB 13768 / 1H11).